Here is a 150-residue protein sequence, read N- to C-terminus: Arginine repressor (150 aa).

Belongs to the ArgR family.

It is found in the cytoplasm. The protein operates within amino-acid biosynthesis; L-arginine biosynthesis [regulation]. In terms of biological role, regulates arginine biosynthesis genes. The chain is Arginine repressor from Clostridium botulinum (strain 657 / Type Ba4).